Here is a 719-residue protein sequence, read N- to C-terminus: Phosphoribosylformylglycinamidine synthase subunit PurL (719 aa).

His-47 is a catalytic residue. Positions 50 and 89 each coordinate ATP. Glu-91 lines the Mg(2+) pocket. Substrate contacts are provided by residues 92 to 95 (SHNH) and Arg-114. His-93 acts as the Proton acceptor in catalysis. Asp-115 is a binding site for Mg(2+). Gln-238 contributes to the substrate binding site. Residue Asp-266 participates in Mg(2+) binding. Residue 310–312 (ESQ) coordinates substrate. Residues Asp-488 and Gly-525 each coordinate ATP. Asn-526 is a Mg(2+) binding site. A substrate-binding site is contributed by Ser-528.

This sequence belongs to the FGAMS family. As to quaternary structure, monomer. Part of the FGAM synthase complex composed of 1 PurL, 1 PurQ and 2 PurS subunits.

The protein localises to the cytoplasm. It catalyses the reaction N(2)-formyl-N(1)-(5-phospho-beta-D-ribosyl)glycinamide + L-glutamine + ATP + H2O = 2-formamido-N(1)-(5-O-phospho-beta-D-ribosyl)acetamidine + L-glutamate + ADP + phosphate + H(+). It functions in the pathway purine metabolism; IMP biosynthesis via de novo pathway; 5-amino-1-(5-phospho-D-ribosyl)imidazole from N(2)-formyl-N(1)-(5-phospho-D-ribosyl)glycinamide: step 1/2. Functionally, part of the phosphoribosylformylglycinamidine synthase complex involved in the purines biosynthetic pathway. Catalyzes the ATP-dependent conversion of formylglycinamide ribonucleotide (FGAR) and glutamine to yield formylglycinamidine ribonucleotide (FGAM) and glutamate. The FGAM synthase complex is composed of three subunits. PurQ produces an ammonia molecule by converting glutamine to glutamate. PurL transfers the ammonia molecule to FGAR to form FGAM in an ATP-dependent manner. PurS interacts with PurQ and PurL and is thought to assist in the transfer of the ammonia molecule from PurQ to PurL. This Cereibacter sphaeroides (strain ATCC 17025 / ATH 2.4.3) (Rhodobacter sphaeroides) protein is Phosphoribosylformylglycinamidine synthase subunit PurL.